The following is a 91-amino-acid chain: Non-specific lipid-transfer protein P3 (91 aa).

Cystine bridges form between Cys3–Cys50, Cys13–Cys27, Cys28–Cys73, and Cys48–Cys87.

Its subcellular location is the secreted. Plant non-specific lipid-transfer proteins transfer phospholipids as well as galactolipids across membranes. May play a role in wax or cutin deposition in the cell walls of expanding epidermal cells and certain secretory tissues. The protein is Non-specific lipid-transfer protein P3 of Vitis sp. (Grape).